The sequence spans 250 residues: UPF0014 membrane protein YjkA (250 aa).

6 helical membrane-spanning segments follow: residues 3-23, 32-52, 57-77, 91-111, 117-137, and 214-234; these read YLSL…SKSF, IIAT…LSLI, HPVF…QNVI, FAAL…LHII, YVIP…SLFL, and LLIV…LSVL.

Belongs to the UPF0014 family.

The protein resides in the cell membrane. The sequence is that of UPF0014 membrane protein YjkA (yjkA) from Bacillus subtilis (strain 168).